Reading from the N-terminus, the 477-residue chain is Glutamyl-tRNA(Gln) amidotransferase subunit A (477 aa).

Catalysis depends on charge relay system residues Lys68 and Ser143. Ser167 serves as the catalytic Acyl-ester intermediate.

It belongs to the amidase family. GatA subfamily. Heterotrimer of A, B and C subunits.

It catalyses the reaction L-glutamyl-tRNA(Gln) + L-glutamine + ATP + H2O = L-glutaminyl-tRNA(Gln) + L-glutamate + ADP + phosphate + H(+). Its function is as follows. Allows the formation of correctly charged Gln-tRNA(Gln) through the transamidation of misacylated Glu-tRNA(Gln) in organisms which lack glutaminyl-tRNA synthetase. The reaction takes place in the presence of glutamine and ATP through an activated gamma-phospho-Glu-tRNA(Gln). This chain is Glutamyl-tRNA(Gln) amidotransferase subunit A (gatA), found in Mycoplasma genitalium (strain ATCC 33530 / DSM 19775 / NCTC 10195 / G37) (Mycoplasmoides genitalium).